The primary structure comprises 212 residues: RNA chaperone ProQ (212 aa).

Residues 114–149 (RIAKAGKTSAPAANAKKPVKKPVARRPKAAPSAKPV) are disordered. Positions 118-129 (AGKTSAPAANAK) are enriched in low complexity. The span at 130-141 (KPVKKPVARRPK) shows a compositional bias: basic residues.

It belongs to the ProQ family.

It is found in the cytoplasm. In terms of biological role, RNA chaperone with significant RNA binding, RNA strand exchange and RNA duplexing activities. This Shewanella piezotolerans (strain WP3 / JCM 13877) protein is RNA chaperone ProQ.